The primary structure comprises 324 residues: MAPLLLQLAVLGAALAAAALVLISIVAFTTATKMPALHRHEEEKFFLNAKGQKETLPSIWDSPTKQLSVVVPSYNEEKRLPVMMDEALSYLEKRQKRDPAFTYEVIVVDDGSKDQTSKVAFKYCQKYGSDKVRVITLVKNRGKGGAIRMGIFSSRGEKILMADADGATKFPDVEKLEKGLNDLQPWPNQMAIACGSRAHLEKESIAQRSYFRTLLMYGFHFLVWFLCVKGIRDTQCGFKLFTREAASRTFSSLHVERWAFDVELLYIAQFFKIPIAEIAVNWTEIEGSKLVPFWSWLQMGKDLLFIRLRYLTGAWRLEQTRKMN.

Residues 1 to 7 lie on the Lumenal side of the membrane; that stretch reads MAPLLLQ. Residues 8 to 28 form a helical; Signal-anchor for type II membrane protein membrane-spanning segment; sequence LAVLGAALAAAALVLISIVAF. Residues 29 to 324 are Cytoplasmic-facing; that stretch reads TTATKMPALH…WRLEQTRKMN (296 aa).

Belongs to the glycosyltransferase 2 family. Expressed in pancreas, placenta, liver, heart, brain, kidney, skeletal muscle, and lung.

The protein resides in the endoplasmic reticulum membrane. The catalysed reaction is a di-trans,poly-cis-dolichyl phosphate + UDP-alpha-D-glucose = a di-trans,poly-cis-dolichyl beta-D-glucosyl phosphate + UDP. Its pathway is protein modification; protein glycosylation. In terms of biological role, dolichyl-phosphate beta-glucosyltransferase that operates in the biosynthetic pathway of dolichol-linked oligosaccharides, the glycan precursors employed in protein asparagine (N)-glycosylation. The assembly of dolichol-linked oligosaccharides begins on the cytosolic side of the endoplasmic reticulum membrane and finishes in its lumen. The sequential addition of sugars to dolichol pyrophosphate produces dolichol-linked oligosaccharides containing fourteen sugars, including two GlcNAcs, nine mannoses and three glucoses. Once assembled, the oligosaccharide is transferred from the lipid to nascent proteins by oligosaccharyltransferases. Dolichyl-phosphate beta-glucosyltransferase produces dolichyl beta-D-glucosyl phosphate/Dol-P-Glc, the glucose donor substrate used sequentially by ALG6, ALG8 and ALG10 to add glucose residues on top of the Man(9)GlcNAc(2)-PP-Dol structure. These are the three last steps in the biosynthetic pathway of dolichol-linked oligosaccharides to produce Glc(3)Man(9)GlcNAc(2)-PP-Dol. The enzyme is most probably active on the cytoplasmic side of the endoplasmic reticulum while its product Dol-P-Glc is the substrate for ALG6, ALG8 and ALG11 in the lumen of the endoplasmic reticulum. This is Dolichyl-phosphate beta-glucosyltransferase from Homo sapiens (Human).